Reading from the N-terminus, the 576-residue chain is Aspartate--tRNA ligase (576 aa).

Residue E173 participates in L-aspartate binding. The tract at residues 197-200 (QLFK) is aspartate. Position 219 (R219) interacts with L-aspartate. ATP is bound by residues 219-221 (RDE) and Q228. Residue H438 participates in L-aspartate binding. ATP is bound at residue E470. R477 is a binding site for L-aspartate. 522–525 (GLDR) contacts ATP.

The protein belongs to the class-II aminoacyl-tRNA synthetase family. Type 1 subfamily. In terms of assembly, homodimer.

The protein localises to the cytoplasm. It catalyses the reaction tRNA(Asp) + L-aspartate + ATP = L-aspartyl-tRNA(Asp) + AMP + diphosphate. Its function is as follows. Catalyzes the attachment of L-aspartate to tRNA(Asp) in a two-step reaction: L-aspartate is first activated by ATP to form Asp-AMP and then transferred to the acceptor end of tRNA(Asp). The chain is Aspartate--tRNA ligase from Aster yellows witches'-broom phytoplasma (strain AYWB).